The primary structure comprises 611 residues: Protein halfway (611 aa).

The N-terminal stretch at 1–22 is a signal peptide; the sequence is MLAYTHGTWLLLLLLLVAGACA. Disordered regions lie at residues 31–64, 90–132, and 154–185; these read DPAALGEESTPHAHAHPQARHHHHAHPHAPLKED, SLAE…AAPE, and GRAETSEGQGSTVAQSEAQNRGGQGNSQCQCR. Residues 43 to 59 show a composition bias toward basic residues; the sequence is AHAHPQARHHHHAHPHA. Over residues 90-101 the composition is skewed to polar residues; the sequence is SLAETQSMSDPG. A compositionally biased stretch (low complexity) spans 102-123; sequence SVTDTTSTSTSHSTSTTSTTSP. Polar residues predominate over residues 159–183; that stretch reads SEGQGSTVAQSEAQNRGGQGNSQCQ. N-linked (GlcNAc...) asparagine glycosylation is found at N221, N246, N264, and N269. LRR repeat units lie at residues 236–257, 259–280, 283–304, and 313–334; these read SLQSLAVTDGNITRLVNAFPRL, ALKCLNISNNNISEIHSRAVKD, HLEFFGMSNNNLSLVPHRNQNK, and NMRMLCTPLNEIIYTESINFLN. Residues 361–416 form the LRRNT domain; sequence ENRKRCVTNCPVIPNYGSCNCTLENIMIIQDNQSKPQCHVDCSNLGLVELPQRLPD. LRR repeat units follow at residues 417–438, 443–464, and 468–489; these read NTFMLNITNNKITSLGDYFHTN, NINRLLADNNQISSIYEFEGTK, and TFQRIYMRNNSLSKIPEYFLNN. Residues 505–554 form the LRRCT domain; sequence NKLQCDCNSAKTLQNWLKERSSDIPDYMEIRCRNMPQRVIELQEAKLCQS.

Functionally, has a role in the ecdysone induced cascade; probably indirect control of 'late' ecdysone genes. The polypeptide is Protein halfway (Drosophila melanogaster (Fruit fly)).